The primary structure comprises 97 residues: Large ribosomal subunit protein eL21 (97 aa).

Positions 1 to 24 (MVQKAHSFRRKTRKKLRKHPRRRG) are enriched in basic residues. A disordered region spans residues 1 to 25 (MVQKAHSFRRKTRKKLRKHPRRRGL).

This sequence belongs to the eukaryotic ribosomal protein eL21 family.

The chain is Large ribosomal subunit protein eL21 (rpl21e) from Pyrococcus abyssi (strain GE5 / Orsay).